Consider the following 2382-residue polypeptide: Serine/threonine-protein kinase WNK1 (2382 aa).

Disordered regions lie at residues 1–81 (MSGG…RFFR) and 95–203 (LPGL…QQDD). 2 positions are modified to phosphoserine: Ser-15 and Ser-19. Basic and acidic residues predominate over residues 50–66 (RTEEYRRRRHTMDKDSR). Residue Thr-60 is modified to Phosphothreonine. Low complexity-rich tracts occupy residues 95 to 108 (LPGL…PSIP) and 125 to 153 (VTAT…GPAP). Phosphoserine is present on residues Ser-167 and Ser-174. One can recognise a Protein kinase domain in the interval 221–479 (LKFDIEIGRG…IKDLLNHAFF (259 aa)). An ATP-binding site is contributed by Ser-231. 2 residues coordinate chloride: Phe-283 and Leu-299. ATP is bound by residues 301 to 304 (TELM) and Lys-351. Asp-368 functions as the Proton acceptor in the catalytic mechanism. Leu-369 and Leu-371 together coordinate chloride. Residues Ser-378 and Ser-382 each carry the phosphoserine; by autocatalysis modification. Positions 488-555 (ELAEEDDGEK…VCEGDHKTMA (68 aa)) are autoinhibitory domain. Over residues 573–588 (QLVREEQEKKKQEESS) the composition is skewed to basic and acidic residues. Disordered stretches follow at residues 573-779 (QLVR…QPQA), 1018-1041 (QPGG…STQG), and 1053-1119 (VAQT…SRPK). Over residues 598–614 (ASQTGIKQLPSASTGIP) the composition is skewed to polar residues. A compositionally biased stretch (low complexity) spans 615-625 (TASTTSASVST). The interaction with KLHL3 stretch occupies residues 628–638 (EPEEPEADQHQ). Polar residues predominate over residues 637–689 (HQQLQYQQPSISVLSDGTVDSGQGSSVFTESRVSSQQTVSYGSQHEQAHSTGT). A compositionally biased stretch (low complexity) spans 709 to 779 (PPSSVAQGQS…TAQPVSQPQA (71 aa)). Over residues 1025 to 1041 (QAPTTSSQQAVLESTQG) the composition is skewed to polar residues. Over residues 1053-1077 (VAQTQATQPTTLASSVDSAHSDVAS) the composition is skewed to low complexity. Residues 1080–1090 (SDGNENVPSSS) show a composition bias toward polar residues. Residues 1098–1119 (TKRHYRKSVRSRSRHEKTSRPK) are compositionally biased toward basic residues. An RFXV motif 1 motif is present at residues 1257 to 1260 (RFIV). Ser-1261 carries the post-translational modification Phosphoserine. Low complexity-rich tracts occupy residues 1457–1467 (SASAGGSTATP) and 1733–1745 (QVST…TSGV). 2 disordered regions span residues 1457 to 1476 (SASA…AVVS) and 1733 to 1790 (QVST…TQSQ). Thr-1848 is modified (phosphothreonine). The short motif at 1859-1862 (RFQV) is the RFXV motif 2 element. The interval 1866-1948 (ADGAQKEGKN…QPTKVGRFQV (83 aa)) is disordered. Positions 1869-1884 (AQKEGKNKSEDAKSVH) are enriched in basic and acidic residues. Positions 1887 to 1905 (SSTSESSVLSSSSPESTLV) are enriched in low complexity. Polar residues predominate over residues 1927 to 1940 (KTTASEAKSDTGQP). 2 short sequence motifs (RFXV motif) span residues 1945 to 1948 (RFQV) and 1957 to 1960 (RFSV). 7 positions are modified to phosphoserine: Ser-1978, Ser-2002, Ser-2011, Ser-2012, Ser-2027, Ser-2029, and Ser-2032. Over residues 1994–2003 (PKKEKPELSE) the composition is skewed to basic and acidic residues. Disordered stretches follow at residues 1994 to 2069 (PKKE…DIED) and 2101 to 2196 (LYTK…NLYS). A compositionally biased stretch (low complexity) spans 2035-2062 (QLSSKSLPSQNLSQSLSNSFNSSYMSSD). Ser-2121 bears the Phosphoserine mark. Over residues 2122–2134 (GRRRRPTKSKGSK) the composition is skewed to basic residues. A compositionally biased stretch (low complexity) spans 2135-2145 (SSRSSSLGNKS). Polar residues-rich tracts occupy residues 2146 to 2167 (PQLS…QQTL) and 2175 to 2196 (ESGQ…NLYS). An amphipathic alpha-helix region spans residues 2241–2261 (SRKGTFTDDLHKLVDNWARDA). A phosphoserine mark is found at Ser-2270 and Ser-2286. Residues 2332–2352 (PFGAQWSGTGGPAPQPLGQFQ) form a disordered region. 2 positions are modified to phosphoserine: Ser-2370 and Ser-2372.

It belongs to the protein kinase superfamily. Ser/Thr protein kinase family. WNK subfamily. Interacts with WNK3. Interacts with WNK4; inhibiting the activity of WNK4. Interacts with SGK1; promoting its activation. Associates with the mTORC2 complex. Interacts with UVRAG. Interacts (via amphipathic alpha-helix region) with EMC2; promoting the ER membrane protein complex assembly. In terms of assembly, interacts with isoform 1; inhibiting isoform 1 activity. Mg(2+) serves as cofactor. In terms of processing, autophosphorylated at Ser-378 and Ser-382, promoting its activity. Autophosphorylation at Ser-382 is inhibited by intracellular calcium. Phosphorylation at Thr-60 increases ability to activate SGK1. Ubiquitinated by the BCR(KLHL3) complex, leading to its degradation. Also ubiquitinated by the BCR(KLHL2) complex. Post-translationally, may be O-glycosylated. As to expression, widely expressed, with highest levels observed in the testis, heart, kidney and skeletal muscle. Strong expression in dorsal root ganglia and spinal cord. In terms of tissue distribution, this isoform is kidney-specific and specifically expressed in the distal convoluted tubule (DCT) and connecting tubule (CNT) of the nephron.

The protein localises to the cytoplasm. The protein resides in the nucleus. It is found in the cytoskeleton. Its subcellular location is the spindle. It carries out the reaction L-seryl-[protein] + ATP = O-phospho-L-seryl-[protein] + ADP + H(+). The catalysed reaction is L-threonyl-[protein] + ATP = O-phospho-L-threonyl-[protein] + ADP + H(+). Its activity is regulated as follows. Activated in response to hyperosmotic stress: cell shrinkage promotes formation of a membraneless compartment that concentrates WNK1 with its substrates, OXSR1/OSR1 and STK39/SPAK. Activation requires autophosphorylation of Ser-382 and, to a lower extent, Ser-378. Autophosphorylation and subsequent activation is inhibited by increases in intracellular ionic strength: Cl(-) potently inhibits WNK1 kinase activity via direct binding. Also inhibited by K(+) ions. Inhibited by small compounds staurosporine, tyrphostin 47, as well as Src tyrosine kinase inhibitors PP1 and PP2. Serine/threonine-protein kinase component of the WNK1-SPAK/OSR1 kinase cascade, which acts as a key regulator of blood pressure and regulatory volume increase by promoting ion influx. WNK1 mediates regulatory volume increase in response to hyperosmotic stress by acting as a molecular crowding sensor, which senses cell shrinkage and mediates formation of a membraneless compartment by undergoing liquid-liquid phase separation. The membraneless compartment concentrates WNK1 with its substrates, OXSR1/OSR1 and STK39/SPAK, promoting WNK1-dependent phosphorylation and activation of downstream kinases OXSR1/OSR1 and STK39/SPAK. Following activation, OXSR1/OSR1 and STK39/SPAK catalyze phosphorylation of ion cotransporters SLC12A1/NKCC2, SLC12A2/NKCC1, SLC12A5/KCC2 and SLC12A6/KCC3, regulating their activity. Phosphorylation of Na-K-Cl cotransporters SLC12A2/NKCC1 and SLC12A2/NKCC1 promote their activation and ion influx; simultaneously, phosphorylation of K-Cl cotransporters SLC12A5/KCC2 and SLC12A6/KCC3 inhibit their activity, blocking ion efflux. Also acts as a regulator of angiogenesis in endothelial cells via activation of OXSR1/OSR1 and STK39/SPAK: activation of OXSR1/OSR1 regulates chemotaxis and invasion, while STK39/SPAK regulates endothelial cell proliferation. Also acts independently of the WNK1-SPAK/OSR1 kinase cascade by catalyzing phosphorylation of other substrates, such as SYT2, PCF11 and NEDD4L. Mediates phosphorylation of SYT2, regulating SYT2 association with phospholipids and membrane-binding. Regulates mRNA export in the nucleus by mediating phosphorylation of PCF11, thereby decreasing the association between PCF11 and POLR2A/RNA polymerase II and promoting mRNA export to the cytoplasm. Acts as a negative regulator of autophagy. Required for the abscission step during mitosis, independently of the WNK1-SPAK/OSR1 kinase cascade. May also play a role in actin cytoskeletal reorganization. Also acts as a scaffold protein independently of its protein kinase activity: negatively regulates cell membrane localization of various transporters and channels, such as SLC4A4, SLC26A6, SLC26A9, TRPV4 and CFTR. Involved in the regulation of epithelial Na(+) channel (ENaC) by promoting activation of SGK1 in a kinase-independent manner: probably acts as a scaffold protein that promotes the recruitment of SGK1 to the mTORC2 complex in response to chloride, leading to mTORC2-dependent phosphorylation and activation of SGK1. Acts as an assembly factor for the ER membrane protein complex independently of its protein kinase activity: associates with EMC2 in the cytoplasm via its amphipathic alpha-helix, and prevents EMC2 ubiquitination and subsequent degradation, thereby promoting EMC2 stabilization. Its function is as follows. Kinase-defective isoform specifically expressed in kidney, which acts as a dominant-negative regulator of the longer isoform 1. Does not directly inhibit WNK4 and has no direct effect on sodium and chloride ion transport. Down-regulates sodium-chloride cotransporter activity indirectly by inhibiting isoform 1, it associates with isoform 1 and attenuates its kinase activity. In kidney, may play an important role regulating sodium and potassium balance. This is Serine/threonine-protein kinase WNK1 from Homo sapiens (Human).